A 244-amino-acid chain; its full sequence is B3 domain-containing protein At2g36080 (244 aa).

Positions phenylalanine 38–glycine 144 form a DNA-binding region, TF-B3.

It is found in the nucleus. The protein is B3 domain-containing protein At2g36080 (ARF31) of Arabidopsis thaliana (Mouse-ear cress).